Reading from the N-terminus, the 98-residue chain is Co-chaperonin GroES (98 aa).

The protein belongs to the GroES chaperonin family. In terms of assembly, heptamer of 7 subunits arranged in a ring. Interacts with the chaperonin GroEL.

It localises to the cytoplasm. Functionally, together with the chaperonin GroEL, plays an essential role in assisting protein folding. The GroEL-GroES system forms a nano-cage that allows encapsulation of the non-native substrate proteins and provides a physical environment optimized to promote and accelerate protein folding. GroES binds to the apical surface of the GroEL ring, thereby capping the opening of the GroEL channel. In Brucella abortus (strain S19), this protein is Co-chaperonin GroES.